A 134-amino-acid polypeptide reads, in one-letter code: 4-carboxymuconolactone decarboxylase (134 aa).

This sequence belongs to the carboxymuconolactone decarboxylase family.

The catalysed reaction is (R)-2-(carboxymethyl)-5-oxo-2,5-dihydro-2-furoate + H(+) = (4,5-dihydro-5-oxofuran-2-yl)-acetate + CO2. The protein operates within aromatic compound metabolism; beta-ketoadipate pathway; 5-oxo-4,5-dihydro-2-furylacetate from 3-carboxy-cis,cis-muconate: step 2/2. This Acinetobacter baylyi (strain ATCC 33305 / BD413 / ADP1) protein is 4-carboxymuconolactone decarboxylase (pcaC).